The following is a 392-amino-acid chain: Formate-dependent phosphoribosylglycinamide formyltransferase (392 aa).

Residues 22-23 (EL) and Glu82 each bind N(1)-(5-phospho-beta-D-ribosyl)glycinamide. Residues Arg114, Lys155, 160-165 (SSGKGQ), 195-198 (EGVV), and Glu203 each bind ATP. Residues 119–308 (RLAAEELQLP…EFALHVRAFL (190 aa)) enclose the ATP-grasp domain. Residues Glu267 and Glu279 each contribute to the Mg(2+) site. N(1)-(5-phospho-beta-D-ribosyl)glycinamide-binding positions include Asp286, Lys355, and 362–363 (RR).

The protein belongs to the PurK/PurT family. In terms of assembly, homodimer.

It catalyses the reaction N(1)-(5-phospho-beta-D-ribosyl)glycinamide + formate + ATP = N(2)-formyl-N(1)-(5-phospho-beta-D-ribosyl)glycinamide + ADP + phosphate + H(+). It functions in the pathway purine metabolism; IMP biosynthesis via de novo pathway; N(2)-formyl-N(1)-(5-phospho-D-ribosyl)glycinamide from N(1)-(5-phospho-D-ribosyl)glycinamide (formate route): step 1/1. Involved in the de novo purine biosynthesis. Catalyzes the transfer of formate to 5-phospho-ribosyl-glycinamide (GAR), producing 5-phospho-ribosyl-N-formylglycinamide (FGAR). Formate is provided by PurU via hydrolysis of 10-formyl-tetrahydrofolate. This is Formate-dependent phosphoribosylglycinamide formyltransferase from Escherichia coli O157:H7.